An 88-amino-acid polypeptide reads, in one-letter code: Small ribosomal subunit protein bS20 (88 aa).

The segment at 1 to 23 (MANSPQAKKRARQNDKARAHNAS) is disordered.

This sequence belongs to the bacterial ribosomal protein bS20 family.

Its function is as follows. Binds directly to 16S ribosomal RNA. In Teredinibacter turnerae (strain ATCC 39867 / T7901), this protein is Small ribosomal subunit protein bS20.